We begin with the raw amino-acid sequence, 85 residues long: Large ribosomal subunit protein bL27 (85 aa).

The interval 1–20 (MAHKKAGGSTRNGRDSESKR) is disordered.

Belongs to the bacterial ribosomal protein bL27 family.

This chain is Large ribosomal subunit protein bL27, found in Yersinia enterocolitica serotype O:8 / biotype 1B (strain NCTC 13174 / 8081).